The primary structure comprises 256 residues: MHPQDASTEQTPVDDDQVESSQPVHAPEDVAHPRRIRSFVRRAGRTSSGQQRAIDEVGPRLIVPYAPHPLDWEAAFGRKAPAILEIGFGMGETTAHIAQLRPQDNFLGCEVHEPGVGALLKLADEREIGNIRIIQHDAVEVVAHMLTEDCLDGVHIYFPDPWHKKRHNKRRLVQPPLVKLLASRLKPGGYIHCATDWEEYAHQMVEVLAGEPALENASSAADGFSERPEYRPITKFERRGVRLGHGVWDVVFRKRG.

Polar residues predominate over residues 1–11; sequence MHPQDASTEQT. Residues 1–35 are disordered; the sequence is MHPQDASTEQTPVDDDQVESSQPVHAPEDVAHPRR. S-adenosyl-L-methionine contacts are provided by Glu-85, Glu-110, Asp-137, and Asp-160. The active site involves Asp-160. Position 164 (Lys-164) interacts with substrate. Residues 166 to 171 form an interaction with RNA region; sequence RHNKRR. Residues Asp-196 and 234 to 237 contribute to the substrate site; that span reads TKFE.

The protein belongs to the class I-like SAM-binding methyltransferase superfamily. TrmB family.

The enzyme catalyses guanosine(46) in tRNA + S-adenosyl-L-methionine = N(7)-methylguanosine(46) in tRNA + S-adenosyl-L-homocysteine. The protein operates within tRNA modification; N(7)-methylguanine-tRNA biosynthesis. Its function is as follows. Catalyzes the formation of N(7)-methylguanine at position 46 (m7G46) in tRNA. This is tRNA (guanine-N(7)-)-methyltransferase from Cupriavidus pinatubonensis (strain JMP 134 / LMG 1197) (Cupriavidus necator (strain JMP 134)).